The following is a 91-amino-acid chain: Pre-early 3 receptor internalization and degradation alpha protein (91 aa).

Over 1-4 (MIPR) the chain is Cytoplasmic. A propeptide spans 1 to 22 (MIPRVLILLTLVALFCACSTLA) (signal peptide). Residues 5–25 (VLILLTLVALFCACSTLAAVA) traverse the membrane as a helical segment. The Lumenal segment spans residues 26–34 (HIEVDCIPP). The chain crosses the membrane as a helical span at residues 35–60 (FTVYLLYGFVTLILICSLVTVVIAFI). Over 61–91 (QFIDWVCVRIAYLRHHPQYRDRTIADLLRIL) the chain is Cytoplasmic.

This sequence belongs to the adenoviridae E3-RID-alpha family. In terms of assembly, homodimer with only one chain cleaved by signal peptidase. Interacts with E3 RID-beta and E3 CR1-alpha. The signal peptide is only cleaved partially by host signal peptidase. This results in two forms of the protein, one uncleaved with two transmembrane regions, and one cleaved with one transmembrane region.

The protein resides in the host membrane. It is found in the host endoplasmic reticulum. Its function is as follows. Prevents infected cell apoptosis induced by the host immune system. Acts by down-regulating a number of cell surface receptors in the tumor necrosis factor (TNF) receptor superfamily, namely FAS, TNFRSF10A/TRAIL receptor 1, and TNFRSF10B/TRAIL receptor 2. Down-regulation of these death receptors protects adenovirus-infected cells from apoptosis induced by the death receptor ligands Fas ligand and TRAIL. RID complex also down-regulates certain tyrosine kinase cell surface receptors, especially the epidermal growth factor receptor (EGFR). RID-mediated Fas and EGFR down-regulation occurs via endocytosis of the receptors into endosomes followed by transport to and degradation within lysosomes. The protein is Pre-early 3 receptor internalization and degradation alpha protein of Homo sapiens (Human).